We begin with the raw amino-acid sequence, 442 residues long: Ribosomal protein uS12 methylthiotransferase RimO (442 aa).

Positions 8-118 (PKVGFVSLGC…VLGHVHKYVA (111 aa)) constitute an MTTase N-terminal domain. Positions 17, 53, 82, 150, 154, and 157 each coordinate [4Fe-4S] cluster. Residues 136–373 (LTPRHYAYLK…MELQQQVSIR (238 aa)) enclose the Radical SAM core domain. Residues 376-442 (ARKVGKEMTV…EYDLWASLIG (67 aa)) enclose the TRAM domain.

The protein belongs to the methylthiotransferase family. RimO subfamily. It depends on [4Fe-4S] cluster as a cofactor.

The protein localises to the cytoplasm. The catalysed reaction is L-aspartate(89)-[ribosomal protein uS12]-hydrogen + (sulfur carrier)-SH + AH2 + 2 S-adenosyl-L-methionine = 3-methylsulfanyl-L-aspartate(89)-[ribosomal protein uS12]-hydrogen + (sulfur carrier)-H + 5'-deoxyadenosine + L-methionine + A + S-adenosyl-L-homocysteine + 2 H(+). Functionally, catalyzes the methylthiolation of an aspartic acid residue of ribosomal protein uS12. This chain is Ribosomal protein uS12 methylthiotransferase RimO, found in Aeromonas salmonicida (strain A449).